A 542-amino-acid chain; its full sequence is MFS thioclapurine efflux transporter tcpA (542 aa).

Basic and acidic residues predominate over residues 1–10; that stretch reads MATVGTEEKN. Residues 1–24 form a disordered region; sequence MATVGTEEKNPIGSASNTAEPNVT. Over residues 13–24 the composition is skewed to polar residues; that stretch reads GSASNTAEPNVT. A glycan (N-linked (GlcNAc...) asparagine) is linked at Asn-22. 3 consecutive transmembrane segments (helical) span residues 32 to 52, 75 to 97, and 103 to 123; these read SGFK…LCGL, GWYT…KLYT, and MILL…AAAP. An N-linked (GlcNAc...) asparagine glycan is attached at Asn-124. Transmembrane regions (helical) follow at residues 133–153, 161–181, 193–213, 234–254, 265–285, and 307–327; these read AIAG…LVHA, ALLG…PFIG, CFII…FFVF, IPEI…LQWG, IIAL…LQVL, and IFAL…PIYF. Asn-332 is a glycosylation site (N-linked (GlcNAc...) asparagine). The chain crosses the membrane as a helical span at residues 339–359; sequence GVNVMPLILGFLVMSIISGVI. Asn-361 carries N-linked (GlcNAc...) asparagine glycosylation. 4 helical membrane-spanning segments follow: residues 370–390, 396–416, 427–447, and 500–520; these read MFLC…FDVG, WIGY…QPIV, VPFG…IFVA, and VLGQ…LGSL.

It belongs to the major facilitator superfamily.

It localises to the cell membrane. MFS efflux transporter probably involved in thioclapurine export. This chain is MFS thioclapurine efflux transporter tcpA, found in Claviceps purpurea (strain 20.1) (Ergot fungus).